Reading from the N-terminus, the 310-residue chain is Junctional adhesion molecule C (310 aa).

An N-terminal signal peptide occupies residues 1 to 29; sequence MALSRRLRLRLYARLPDFFLLLLFRGCMI. Over 30 to 241 the chain is Extracellular; that stretch reads EAVNLKSSNR…GQDMEVYDLN (212 aa). Residues 35–127 enclose the Ig-like V-type domain; that stretch reads KSSNRNPVVH…VALNDRKEVD (93 aa). Disulfide bonds link Cys53–Cys115 and Cys160–Cys219. N-linked (GlcNAc...) asparagine glycans are attached at residues Asn104 and Asn192. An Ig-like C2-type domain is found at 139-236; sequence PVTPVCRIPA…AARCEGQDME (98 aa). A helical membrane pass occupies residues 242-262; the sequence is IAGIIGGVLVVLIVLAVITMG. The Cytoplasmic segment spans residues 263 to 310; it reads ICCAYRRGCFISSKQDGESYKSPGKHDGVNYIRTSEEGDFRHKSSFVI. S-palmitoyl cysteine attachment occurs at residues Cys264 and Cys265.

This sequence belongs to the immunoglobulin superfamily. Interacts with ITGAM. Interacts with GORASP2. In terms of processing, proteolytically cleaved from endothelial cells surface into a soluble form by ADAM10 and ADAM17; the release of soluble JAM3 is increased by pro-inflammatory factors. N-glycosylated. Post-translationally, S-palmitoylated by ZDHHC7. S-palmitoylation promotes expression at tight junctions. In terms of tissue distribution, colocalizes with Jam2 near the lumen of seminiferous tubulues. Detected at junctional plaques that correspond to cell-cell contacts between spermatids and Sertoli cells. Detected on endothelial cells, in brain vessels and kidney glomeruli (at protein level). Detected in heart, lung, liver, kidney, testis, thymus, lymph node and Peyer patch. Endothelial cells.

It is found in the cell membrane. It localises to the cell junction. The protein localises to the desmosome. Its subcellular location is the tight junction. The protein resides in the secreted. In terms of biological role, junctional adhesion protein that mediates heterotypic cell-cell interactions with its cognate receptor JAM2 to regulate different cellular processes. Plays a role in homing and mobilization of hematopoietic stem and progenitor cells within the bone marrow. At the surface of bone marrow stromal cells, it contributes to the retention of the hematopoietic stem and progenitor cells expressing JAM3. Plays a central role in leukocytes extravasation by facilitating transmigration through the endothelium. Plays a role in spermatogenesis where JAM2 and JAM3, which are respectively expressed by Sertoli and germ cells, mediate an interaction between both cell types and play an essential role in the anchorage of germ cells onto Sertoli cells and the assembly of cell polarity complexes during spermatid differentiation. Also functions as a counter-receptor for ITGAM, mediating leukocyte-platelet interactions and is involved in the regulation of transepithelial migration of polymorphonuclear neutrophils (PMN). Plays a role in angiogenesis. Plays a role in the regulation of cell migration. During myogenesis, it is involved in myocyte fusion. Functionally, promotes chemotaxis of vascular endothelial cells and stimulates angiogenesis. In Mus musculus (Mouse), this protein is Junctional adhesion molecule C (Jam3).